Consider the following 179-residue polypeptide: Large ribosomal subunit protein uL6 (179 aa).

The protein belongs to the universal ribosomal protein uL6 family. In terms of assembly, part of the 50S ribosomal subunit.

Its function is as follows. This protein binds to the 23S rRNA, and is important in its secondary structure. It is located near the subunit interface in the base of the L7/L12 stalk, and near the tRNA binding site of the peptidyltransferase center. The polypeptide is Large ribosomal subunit protein uL6 (Trichlorobacter lovleyi (strain ATCC BAA-1151 / DSM 17278 / SZ) (Geobacter lovleyi)).